We begin with the raw amino-acid sequence, 608 residues long: Glutamyl-tRNA(Gln) amidotransferase subunit E (608 aa).

Residues 402 to 422 (EETRGANPDGTTRFLRPRPGA) form a disordered region.

The protein belongs to the GatB/GatE family. GatE subfamily. Heterodimer of GatD and GatE.

It catalyses the reaction L-glutamyl-tRNA(Gln) + L-glutamine + ATP + H2O = L-glutaminyl-tRNA(Gln) + L-glutamate + ADP + phosphate + H(+). In terms of biological role, allows the formation of correctly charged Gln-tRNA(Gln) through the transamidation of misacylated Glu-tRNA(Gln) in organisms which lack glutaminyl-tRNA synthetase. The reaction takes place in the presence of glutamine and ATP through an activated gamma-phospho-Glu-tRNA(Gln). The GatDE system is specific for glutamate and does not act on aspartate. In Pyrobaculum calidifontis (strain DSM 21063 / JCM 11548 / VA1), this protein is Glutamyl-tRNA(Gln) amidotransferase subunit E.